We begin with the raw amino-acid sequence, 639 residues long: Putative cyclic beta-1,2-glucan modification protein (639 aa).

6 helical membrane-spanning segments follow: residues 34-54, 69-89, 96-116, 144-164, 185-205, and 227-247; these read ALFT…IVRW, PAWT…ALFG, LLIA…QVFL, WTAV…ALLL, FALP…FSWI, and FALA…AGYM.

The protein localises to the cell membrane. This is Putative cyclic beta-1,2-glucan modification protein (cgmA) from Rhizobium meliloti (strain 1021) (Ensifer meliloti).